The following is a 200-amino-acid chain: Alpha-amylase/subtilisin inhibitor (200 aa).

The N-terminal stretch at 1–22 is a signal peptide; the sequence is MVSLRLPLILLSLLAISFSCSA. Cystine bridges form between Cys-63–Cys-112 and Cys-162–Cys-166.

Belongs to the protease inhibitor I3 (leguminous Kunitz-type inhibitor) family.

Its function is as follows. This protein inhibits independently subtilisin and T.castaneum alpha-amylase but not barley alpha-amylase. This is Alpha-amylase/subtilisin inhibitor (RASI) from Oryza sativa subsp. japonica (Rice).